Consider the following 97-residue polypeptide: Co-chaperonin GroES (97 aa).

It belongs to the GroES chaperonin family. In terms of assembly, heptamer of 7 subunits arranged in a ring. Interacts with the chaperonin GroEL.

It localises to the cytoplasm. Functionally, together with the chaperonin GroEL, plays an essential role in assisting protein folding. The GroEL-GroES system forms a nano-cage that allows encapsulation of the non-native substrate proteins and provides a physical environment optimized to promote and accelerate protein folding. GroES binds to the apical surface of the GroEL ring, thereby capping the opening of the GroEL channel. The protein is Co-chaperonin GroES of Stutzerimonas stutzeri (strain A1501) (Pseudomonas stutzeri).